Consider the following 1107-residue polypeptide: Rho GTPase-activating protein 39 (1107 aa).

Residues 1–21 form a disordered region; that stretch reads MSQAQDYECRSHHVDEQEPRI. Serine 2 is modified (N-acetylserine). Basic and acidic residues predominate over residues 7-19; that stretch reads YECRSHHVDEQEP. 2 consecutive WW domains span residues 25–58 and 63–97; these read STRL…PPAG and RTSE…RPQN. The span at 111–122 shows a compositional bias: polar residues; sequence QNTESPRASADN. Disordered regions lie at residues 111-173, 218-267, 282-311, and 326-370; these read QNTE…PPGV, PSFL…PERR, SPLL…LYEE, and MDVQ…LMRT. Low complexity predominate over residues 123–136; it reads SPGRGSRDGSTGSS. A compositionally biased stretch (polar residues) spans 242-254; the sequence is SGSQHSPNLQTFV. At serine 282 the chain carries Phosphoserine. Polar residues-rich tracts occupy residues 331 to 343 and 353 to 369; these read EANS…SPQR and LQTT…QLMR. Phosphoserine is present on residues serine 380, serine 384, serine 402, and serine 403. Disordered stretches follow at residues 404–429, 441–529, and 563–585; these read PKLR…QPSP, SGDY…RASL, and MKQR…GAVP. Over residues 470 to 484 the composition is skewed to polar residues; it reads SWSSQQDTMSSTGYS. Phosphoserine is present on residues serine 597, serine 683, serine 708, and serine 719. One can recognise a MyTH4 domain in the interval 715–867; sequence WSSESIKKPM…PYVEEPDGVA (153 aa). In terms of domain architecture, Rho-GAP spans 914-1102; sequence SALQEVMSMQ…VLIQHLDTSF (189 aa).

The protein resides in the nucleus. This chain is Rho GTPase-activating protein 39 (Arhgap39), found in Mus musculus (Mouse).